Here is a 268-residue protein sequence, read N- to C-terminus: Taurine import ATP-binding protein TauB (268 aa).

The ABC transporter domain occupies 4–236 (LSIENISMRF…MGVNADLREV (233 aa)). An ATP-binding site is contributed by 41-48 (GPSGCGKT).

It belongs to the ABC transporter superfamily. Taurine importer (TC 3.A.1.17.1) family. In terms of assembly, the complex is composed of two ATP-binding proteins (TauB), two transmembrane proteins (TauC) and a solute-binding protein (TauA).

The protein resides in the cell inner membrane. It catalyses the reaction taurine(out) + ATP + H2O = taurine(in) + ADP + phosphate + H(+). In terms of biological role, part of the ABC transporter complex TauABC involved in taurine import. Responsible for energy coupling to the transport system. This Ruegeria pomeroyi (strain ATCC 700808 / DSM 15171 / DSS-3) (Silicibacter pomeroyi) protein is Taurine import ATP-binding protein TauB.